A 259-amino-acid polypeptide reads, in one-letter code: Peroxisomal membrane protein 11B (259 aa).

Lysine 43 carries the N6-acetyllysine modification. Positions 211–259 are interaction with PEX19, PEX11G and FIS1 and peroxisome targeting; the sequence is VVRNACDLFIPLDKLGLWRCGPGIVGLCGLVSSILSILTLIYPWLRLKP. A helical transmembrane segment spans residues 234–254; it reads IVGLCGLVSSILSILTLIYPW.

The protein belongs to the peroxin-11 family. Homodimer. Heterodimer with PEX11G. Interacts with PEX19. Interacts with FIS1.

Its subcellular location is the peroxisome membrane. Functionally, involved in peroxisomal proliferation. May regulate peroxisome division by recruiting the dynamin-related GTPase DNM1L to the peroxisomal membrane. Promotes membrane protrusion and elongation on the peroxisomal surface. The sequence is that of Peroxisomal membrane protein 11B (PEX11B) from Pongo abelii (Sumatran orangutan).